A 216-amino-acid polypeptide reads, in one-letter code: Small ribosomal subunit protein uS2 (216 aa).

Belongs to the universal ribosomal protein uS2 family.

The protein is Small ribosomal subunit protein uS2 of Carsonella ruddii (strain PV).